A 260-amino-acid polypeptide reads, in one-letter code: GTP cyclohydrolase FolE2 (260 aa).

This sequence belongs to the GTP cyclohydrolase IV family.

It catalyses the reaction GTP + H2O = 7,8-dihydroneopterin 3'-triphosphate + formate + H(+). It participates in cofactor biosynthesis; 7,8-dihydroneopterin triphosphate biosynthesis; 7,8-dihydroneopterin triphosphate from GTP: step 1/1. Functionally, converts GTP to 7,8-dihydroneopterin triphosphate. The sequence is that of GTP cyclohydrolase FolE2 from Desulfosudis oleivorans (strain DSM 6200 / JCM 39069 / Hxd3) (Desulfococcus oleovorans).